The sequence spans 144 residues: C-C motif chemokine 25 (144 aa).

Positions 1-23 (MKLWLFACLVACFVGAWMPVVHA) are cleaved as a signal peptide. 2 disulfide bridges follow: cysteine 30–cysteine 58 and cysteine 31–cysteine 73. Positions 98-144 (KSASDSQTERKKSNHMKSKVENPNSTSVRSATLGHPRMVMMPRKTNN) are disordered. A compositionally biased stretch (polar residues) spans 118-127 (ENPNSTSVRS).

Belongs to the intercrine beta (chemokine CC) family. As to expression, specifically expressed by thymic dendritic cells. High levels in thymus and small intestine.

Its subcellular location is the secreted. In terms of biological role, potentially involved in T-cell development. Recombinant protein shows chemotactic activity on thymocytes, macrophages, THP-1 cells, and dendritics cells but is inactive on peripheral blood lymphocytes and neutrophils. Binds to CCR9. Binds to atypical chemokine receptor ACKR4 and mediates the recruitment of beta-arrestin (ARRB1/2) to ACKR4. The protein is C-C motif chemokine 25 (Ccl25) of Mus musculus (Mouse).